Reading from the N-terminus, the 282-residue chain is HTH-type transcriptional activator RhaR (282 aa).

An HTH araC/xylS-type domain is found at 179-277 (DKLITALANS…GMTPSQWRHL (99 aa)). 2 DNA-binding regions (H-T-H motif) span residues 196–217 (DAFC…RAQT) and 244–267 (ISEI…TRET).

As to quaternary structure, binds DNA as a dimer.

Its subcellular location is the cytoplasm. In terms of biological role, activates expression of the rhaSR operon in response to L-rhamnose. In Salmonella dublin (strain CT_02021853), this protein is HTH-type transcriptional activator RhaR.